A 109-amino-acid chain; its full sequence is Large ribosomal subunit protein uL22 (109 aa).

It belongs to the universal ribosomal protein uL22 family. Part of the 50S ribosomal subunit.

Functionally, this protein binds specifically to 23S rRNA; its binding is stimulated by other ribosomal proteins, e.g. L4, L17, and L20. It is important during the early stages of 50S assembly. It makes multiple contacts with different domains of the 23S rRNA in the assembled 50S subunit and ribosome. The globular domain of the protein is located near the polypeptide exit tunnel on the outside of the subunit, while an extended beta-hairpin is found that lines the wall of the exit tunnel in the center of the 70S ribosome. This is Large ribosomal subunit protein uL22 from Cupriavidus necator (strain ATCC 17699 / DSM 428 / KCTC 22496 / NCIMB 10442 / H16 / Stanier 337) (Ralstonia eutropha).